A 291-amino-acid polypeptide reads, in one-letter code: Protease HtpX homolog (291 aa).

The next 2 membrane-spanning stretches (helical) occupy residues 4-24 and 38-58; these read VVLF…SARV and MGML…ISLL. Residue histidine 144 coordinates Zn(2+). Glutamate 145 is a catalytic residue. Histidine 148 lines the Zn(2+) pocket. The next 2 helical transmembrane spans lie at 159–179 and 199–219; these read LIQG…AYAI and ISSI…VMYF. Residue glutamate 224 participates in Zn(2+) binding.

The protein belongs to the peptidase M48B family. Zn(2+) serves as cofactor.

Its subcellular location is the cell inner membrane. This Chlorobium phaeobacteroides (strain DSM 266 / SMG 266 / 2430) protein is Protease HtpX homolog.